Reading from the N-terminus, the 498-residue chain is ATP synthase subunit beta, chloroplastic (498 aa).

Residue 172–179 coordinates ATP; that stretch reads GGAGVGKT.

The protein belongs to the ATPase alpha/beta chains family. As to quaternary structure, F-type ATPases have 2 components, CF(1) - the catalytic core - and CF(0) - the membrane proton channel. CF(1) has five subunits: alpha(3), beta(3), gamma(1), delta(1), epsilon(1). CF(0) has four main subunits: a(1), b(1), b'(1) and c(9-12).

The protein localises to the plastid. It localises to the chloroplast thylakoid membrane. It catalyses the reaction ATP + H2O + 4 H(+)(in) = ADP + phosphate + 5 H(+)(out). Produces ATP from ADP in the presence of a proton gradient across the membrane. The catalytic sites are hosted primarily by the beta subunits. The sequence is that of ATP synthase subunit beta, chloroplastic from Saruma henryi (Upright wild ginger).